The following is a 506-amino-acid chain: Catalase (506 aa).

Active-site residues include histidine 73 and asparagine 146. Residue tyrosine 356 participates in heme binding. The Microbody targeting signal motif lies at 504 to 506; sequence SKF.

Belongs to the catalase family. As to quaternary structure, homotetramer. Requires heme as cofactor.

Its subcellular location is the peroxisome matrix. The enzyme catalyses 2 H2O2 = O2 + 2 H2O. Catalyzes the degradation of hydrogen peroxide (H(2)O(2)) generated by peroxisomal oxidases to water and oxygen, thereby protecting cells from the toxic effects of hydrogen peroxide. The sequence is that of Catalase (Cat) from Drosophila melanogaster (Fruit fly).